The following is a 1432-amino-acid chain: DNA-directed RNA polymerase subunit beta (1432 aa).

This sequence belongs to the RNA polymerase beta chain family. The RNAP catalytic core consists of 2 alpha, 1 beta, 1 beta' and 1 omega subunit. When a sigma factor is associated with the core the holoenzyme is formed, which can initiate transcription.

The catalysed reaction is RNA(n) + a ribonucleoside 5'-triphosphate = RNA(n+1) + diphosphate. In terms of biological role, DNA-dependent RNA polymerase catalyzes the transcription of DNA into RNA using the four ribonucleoside triphosphates as substrates. This is DNA-directed RNA polymerase subunit beta from Solibacter usitatus (strain Ellin6076).